The chain runs to 406 residues: Ascaroside receptor GPR2 (406 aa).

At 1 to 29 (MTQLPYLLDRRGGALAAPATAWGDMMLNR) the chain is on the extracellular side. The chain crosses the membrane as a helical span at residues 30-50 (ALFSVALLSSVGSAWVVLSYA). Residues 51–61 (CIKELRSYRHQ) lie on the Cytoplasmic side of the membrane. A helical membrane pass occupies residues 62-82 (LILGLAISDLLMSLNFMFSAG). Residues 83-107 (WNVAGGDLALEESRTACSVNGFLTQ) lie on the Extracellular side of the membrane. Cys99 and Cys173 are disulfide-bonded. The chain crosses the membrane as a helical span at residues 108 to 128 (VFVVQTDWWILVIAIATYIIL). At 129-143 (GNFKTQSQFIQTHVW) the chain is on the cytoplasmic side. A helical membrane pass occupies residues 144–164 (IPWVGPWVLSIIIAAICHGVL). The Extracellular segment spans residues 165-185 (GYGYIGGWCWLTSDLMRLLIN). The chain crosses the membrane as a helical span at residues 186 to 206 (FIPRWLIVIAIALIYIRLYMI). The Cytoplasmic segment spans residues 207-326 (VRKARKWDIE…AAQLKRIAKK (120 aa)). The helical transmembrane segment at 327 to 347 (MMVYPVAYAIIWACPTAIRIY) threads the bilayer. Topologically, residues 348–356 (QGTTGSRAP) are extracellular. The chain crosses the membrane as a helical span at residues 357-377 (LWITIVDKSCIVIQGLVDAVV). Residues 378–406 (YGLNERAWQGWRDHIRRIIYKNEGGRIIG) are Cytoplasmic-facing.

This sequence belongs to the G-protein coupled receptor 1 family. In terms of assembly, interacts with ascaroside receptor GPR3; may form a functional heterodimer. Interacts with guanine nucleotide-binding protein alpha GPA2; to activate adenylate cyclase and positively regulate nematode trap formation.

Its subcellular location is the cell membrane. Functionally, g protein-coupled receptor that senses nematode ascaroside pheromones and signals via adenylate cyclase to positively regulate trap formation for nematode capture. The chain is Ascaroside receptor GPR2 from Arthrobotrys oligospora (strain ATCC 24927 / CBS 115.81 / DSM 1491) (Nematode-trapping fungus).